We begin with the raw amino-acid sequence, 1345 residues long: Aldehyde oxidase 2 (1345 aa).

Positions 9-96 constitute a 2Fe-2S ferredoxin-type domain; the sequence is DELEFFVNGK…GAAVTTVEGV (88 aa). The [2Fe-2S] cluster site is built by Cys-48, Cys-53, Cys-56, and Cys-78. Position 117 (Gln-117) interacts with Mo-molybdopterin. Cys-118, Cys-121, Cys-153, and Cys-155 together coordinate [2Fe-2S] cluster. Cys-155 lines the Mo-molybdopterin pocket. The FAD-binding PCMH-type domain occupies 238 to 423; that stretch reads FYGERITWIA…GSVYIPHSQK (186 aa). Residues 266–273, Ala-347, Ser-356, His-360, Asp-369, and Leu-413 contribute to the FAD site; that span reads LISGNTAL. Mo-molybdopterin contacts are provided by residues 812-813, 1094-1097, Gln-1209, and Leu-1274; these read GF and ASVG. The Proton acceptor; for azaheterocycle hydroxylase activity role is filled by Glu-1276.

This sequence belongs to the xanthine dehydrogenase family. Homodimer. Requires [2Fe-2S] cluster as cofactor. FAD serves as cofactor. The cofactor is Mo-molybdopterin.

It localises to the cytoplasm. The catalysed reaction is an aldehyde + O2 + H2O = a carboxylate + H2O2 + H(+). In terms of biological role, oxidase with broad substrate specificity, oxidizing aromatic azaheterocycles, such as phthalazine, as well as aldehydes, such as benzaldehyde and retinal. The sequence is that of Aldehyde oxidase 2 (Aox2) from Rattus norvegicus (Rat).